Consider the following 1201-residue polypeptide: Autophagy-related protein 11 (1201 aa).

Residues 90-109 (FPFLGRPSTPTKGSDNSTGT) form a disordered region. Polar residues predominate over residues 97 to 109 (STPTKGSDNSTGT). Positions 418–452 (LLRSDDMVRSLRDEKSKLEEKVKGSESRIRKLEDL) form a coiled coil. 2 disordered regions span residues 458–503 (HMGR…SEEK) and 525–545 (KLQKDAHAERQSNTDKIQEVQ). A compositionally biased stretch (low complexity) spans 485–499 (RRSSVSSRRMSSNQS). Residues 525–542 (KLQKDAHAERQSNTDKIQ) are compositionally biased toward basic and acidic residues. Coiled-coil stretches lie at residues 566-670 (RRFL…ALQA) and 710-828 (SAKA…WKER). Disordered stretches follow at residues 1052-1076 (SMNGANPDRRSIGEASDGTSFDDEN) and 1115-1201 (DARG…LQGP). A compositionally biased stretch (polar residues) spans 1133–1166 (RTLSKSLDSRRNSSNSKKGPATPSQRGNDSTTDL). Basic and acidic residues predominate over residues 1191–1201 (EEVRRDQLQGP).

Belongs to the ATG11 family. As to quaternary structure, homodimer and potential homooligomers.

Its subcellular location is the preautophagosomal structure membrane. In terms of biological role, selective autophagy-specific protein required for pexophagy and mitophagy. In contrast to its Saccharomyces cerevisiae ATG11 ortholog, is not involved in non-selective autophagy nor in cytoplasm to vacuole transport (Cvt). The polypeptide is Autophagy-related protein 11 (Aspergillus oryzae (strain ATCC 42149 / RIB 40) (Yellow koji mold)).